The following is a 296-amino-acid chain: Mycothiol acetyltransferase (296 aa).

N-acetyltransferase domains follow at residues 1–148 and 151–296; these read MTEW…IRVD and VTVR…YGRA. Position 34 (Glu34) interacts with 1D-myo-inositol 2-(L-cysteinylamino)-2-deoxy-alpha-D-glucopyranoside. Acetyl-CoA-binding positions include 79 to 81 and 87 to 92; these read LVV and RRGIGS. 3 residues coordinate 1D-myo-inositol 2-(L-cysteinylamino)-2-deoxy-alpha-D-glucopyranoside: Glu178, Lys219, and Glu229. Acetyl-CoA contacts are provided by residues 233–235 and 240–246; these read VGV and QGRGLGH. Tyr267 is a 1D-myo-inositol 2-(L-cysteinylamino)-2-deoxy-alpha-D-glucopyranoside binding site. 272 to 277 is a binding site for acetyl-CoA; the sequence is NQAALR.

This sequence belongs to the acetyltransferase family. MshD subfamily. In terms of assembly, monomer.

It catalyses the reaction 1D-myo-inositol 2-(L-cysteinylamino)-2-deoxy-alpha-D-glucopyranoside + acetyl-CoA = mycothiol + CoA + H(+). Functionally, catalyzes the transfer of acetyl from acetyl-CoA to desacetylmycothiol (Cys-GlcN-Ins) to form mycothiol. The polypeptide is Mycothiol acetyltransferase (Mycobacteroides abscessus (strain ATCC 19977 / DSM 44196 / CCUG 20993 / CIP 104536 / JCM 13569 / NCTC 13031 / TMC 1543 / L948) (Mycobacterium abscessus)).